A 312-amino-acid polypeptide reads, in one-letter code: Ribose-phosphate pyrophosphokinase (312 aa).

ATP-binding positions include 34 to 36 (DLE) and 93 to 94 (RQ). The Mg(2+) site is built by His127 and Asp168. Lys192 is a catalytic residue. Residues Arg194, Asp218, and 222-226 (DSAGT) each bind D-ribose 5-phosphate.

Belongs to the ribose-phosphate pyrophosphokinase family. Class I subfamily. In terms of assembly, homohexamer. The cofactor is Mg(2+).

It localises to the cytoplasm. It carries out the reaction D-ribose 5-phosphate + ATP = 5-phospho-alpha-D-ribose 1-diphosphate + AMP + H(+). Its pathway is metabolic intermediate biosynthesis; 5-phospho-alpha-D-ribose 1-diphosphate biosynthesis; 5-phospho-alpha-D-ribose 1-diphosphate from D-ribose 5-phosphate (route I): step 1/1. Functionally, involved in the biosynthesis of the central metabolite phospho-alpha-D-ribosyl-1-pyrophosphate (PRPP) via the transfer of pyrophosphoryl group from ATP to 1-hydroxyl of ribose-5-phosphate (Rib-5-P). This Caulobacter vibrioides (strain ATCC 19089 / CIP 103742 / CB 15) (Caulobacter crescentus) protein is Ribose-phosphate pyrophosphokinase.